The primary structure comprises 459 residues: Vanillin aminotransferase (459 aa).

Residues 115–116 (GS) and D255 each bind pyridoxal 5'-phosphate. K284 is modified (N6-(pyridoxal phosphate)lysine). 320-321 (FT) contributes to the pyridoxal 5'-phosphate binding site. Residues 428–459 (LSLEELDELIRIYGKALKDTEKRVEELKSQKK) are a coiled coil.

The protein belongs to the class-III pyridoxal-phosphate-dependent aminotransferase family. As to expression, expressed in placental tissue of immature fruit.

It catalyses the reaction vanillin + L-alanine = vanillylamine + pyruvate. It participates in aromatic compound metabolism; phenylpropanoid biosynthesis. In terms of biological role, involved in the biosynthesis of capsaicinoids natural products, pungent alkaloids synthesized from phenylpropanoid intermediates in the placental tissue of chili pepper fruit acting as repellant on herbivorous mammals and conferring spiciness to hot peppers. Can transfer an amine from vanillylamine to pyruvate forming vanillin and L-alanine. Can use pyruvate or oxaloacetate, but not 2-oxoglutarate as amino group acceptors. Is able to convert (S)-1-phenylethylamine into acetophenone in vitro. The protein is Vanillin aminotransferase of Capsicum chinense (Scotch bonnet).